The sequence spans 270 residues: Diaminopimelate epimerase (270 aa).

Positions 15, 49, and 66 each coordinate substrate. The Proton donor role is filled by Cys-75. Residues 76–77 (GN), Asn-155, Asn-187, and 204–205 (ER) each bind substrate. Cys-213 acts as the Proton acceptor in catalysis. 214 to 215 (GS) contributes to the substrate binding site.

Belongs to the diaminopimelate epimerase family. In terms of assembly, homodimer.

The protein localises to the cytoplasm. It catalyses the reaction (2S,6S)-2,6-diaminopimelate = meso-2,6-diaminopimelate. The protein operates within amino-acid biosynthesis; L-lysine biosynthesis via DAP pathway; DL-2,6-diaminopimelate from LL-2,6-diaminopimelate: step 1/1. Catalyzes the stereoinversion of LL-2,6-diaminopimelate (L,L-DAP) to meso-diaminopimelate (meso-DAP), a precursor of L-lysine and an essential component of the bacterial peptidoglycan. The protein is Diaminopimelate epimerase of Rickettsia akari (strain Hartford).